The sequence spans 723 residues: UPF0313 protein YgiQ (723 aa).

Residues 372–650 (AYEMIRFSIN…KALLRYHDPA (279 aa)) form the Radical SAM core domain. C386, C390, and C393 together coordinate [4Fe-4S] cluster. The interval 686–723 (EARRQNRNTRPALTKHTPVEHQRQGLAANKKRGKGAGR) is disordered. A compositionally biased stretch (basic residues) spans 714 to 723 (NKKRGKGAGR).

The protein belongs to the UPF0313 family. Requires [4Fe-4S] cluster as cofactor.

The chain is UPF0313 protein YgiQ from Salmonella typhimurium (strain LT2 / SGSC1412 / ATCC 700720).